The primary structure comprises 505 residues: Serine/threonine-protein kinase D (505 aa).

The Protein kinase domain occupies 9 to 271 (YEIVKSLGSG…AMYQALHSLI (263 aa)). ATP is bound by residues 15–23 (LGSGGFGDT) and K40. Residue D136 is the Proton acceptor of the active site. One can recognise an SH3b domain in the interval 436–505 (GASATIGGIP…GWIASQLVNF (70 aa)).

This sequence belongs to the protein kinase superfamily. Ser/Thr protein kinase family.

It catalyses the reaction L-seryl-[protein] + ATP = O-phospho-L-seryl-[protein] + ADP + H(+). It carries out the reaction L-threonyl-[protein] + ATP = O-phospho-L-threonyl-[protein] + ADP + H(+). This chain is Serine/threonine-protein kinase D (spkD), found in Synechocystis sp. (strain ATCC 27184 / PCC 6803 / Kazusa).